We begin with the raw amino-acid sequence, 351 residues long: Protein RecA (351 aa).

Residue 73-80 (GPESSGKT) participates in ATP binding.

The protein belongs to the RecA family.

Its subcellular location is the cytoplasm. Functionally, can catalyze the hydrolysis of ATP in the presence of single-stranded DNA, the ATP-dependent uptake of single-stranded DNA by duplex DNA, and the ATP-dependent hybridization of homologous single-stranded DNAs. It interacts with LexA causing its activation and leading to its autocatalytic cleavage. This chain is Protein RecA, found in Oleidesulfovibrio alaskensis (strain ATCC BAA-1058 / DSM 17464 / G20) (Desulfovibrio alaskensis).